Consider the following 120-residue polypeptide: Large ribosomal subunit protein uL24 (120 aa).

It belongs to the universal ribosomal protein uL24 family. As to quaternary structure, part of the 50S ribosomal subunit.

Its function is as follows. One of two assembly initiator proteins, it binds directly to the 5'-end of the 23S rRNA, where it nucleates assembly of the 50S subunit. In terms of biological role, located at the polypeptide exit tunnel on the outside of the subunit. This is Large ribosomal subunit protein uL24 from Archaeoglobus fulgidus (strain ATCC 49558 / DSM 4304 / JCM 9628 / NBRC 100126 / VC-16).